Here is a 281-residue protein sequence, read N- to C-terminus: MNRLQDDYDPYAVEEPSDEEPALSSSEDELDVLLHGTPDQKRKLIRECLTGESESSSEDEFEKEMEAELNSTMKTMEDQLSSLGTGSSSGVAKVGGVTEKFYDEIYFDSDSEDEDKTVTKKKKKKQHRIPTNDELLYDPEKDNRDQAWVDAKRRGYHAFGLQRPRQKQQPVPNSDAVLNCPACMTTLCLDCQRHESYKTQYRAMFVMNCSINREEVLRYKNPENRRKRRSAKKMRSNPEDPAEREAEEIYHPVMCTECSTEVAVYDKDEVFHFFNVLASHS.

At methionine 1 the chain carries N-acetylmethionine. Residues 1–27 (MNRLQDDYDPYAVEEPSDEEPALSSSE) are disordered. The span at 15–27 (EPSDEEPALSSSE) shows a compositional bias: acidic residues. The residue at position 17 (serine 17) is a Phosphoserine. The residue at position 37 (threonine 37) is a Phosphothreonine. 2 positions are modified to phosphoserine: serine 109 and serine 111. A disordered region spans residues 222–245 (PENRRKRRSAKKMRSNPEDPAERE). A compositionally biased stretch (basic residues) spans 225–235 (RRKRRSAKKMR). The segment covering 236-245 (SNPEDPAERE) has biased composition (basic and acidic residues).

Interacts with E2F1. The C-terminal half binds the N-terminal of E2F1. Also interacts with E2F2 and E2F3, but not E2F4.

The protein resides in the cytoplasm. It is found in the nucleus. Functionally, may play an important role in the fine-tuning of both major E2F1 activities, the regulation of the cell-cycle and the induction of apoptosis. Promotes S-phase entry, and inhibits p14(ARP) expression. In Mus musculus (Mouse), this protein is E2F-associated phosphoprotein (Eapp).